Here is a 774-residue protein sequence, read N- to C-terminus: Lon protease 1 (774 aa).

The Lon N-terminal domain occupies 9–202 (IPLLPLRGLL…KVIDFINNEK (194 aa)). 354–361 (GPPGVGKT) provides a ligand contact to ATP. Positions 590–771 (EDQVGVVTGL…DEVLEHALVG (182 aa)) constitute a Lon proteolytic domain. Active-site residues include S677 and K720.

This sequence belongs to the peptidase S16 family. Homohexamer. Organized in a ring with a central cavity. Exists as a mixture of small oligomeric species in solution.

The protein localises to the cytoplasm. It carries out the reaction Hydrolysis of proteins in presence of ATP.. In terms of biological role, ATP-dependent serine protease that mediates the selective degradation of mutant and abnormal proteins as well as certain short-lived regulatory proteins. Required for cellular homeostasis and for survival from DNA damage and developmental changes induced by stress. Degrades polypeptides processively to yield small peptide fragments that are 5 to 10 amino acids long. Binds to DNA in a double-stranded, site-specific manner. Has been implicated in preventing sigma(G) activity under non-sporulation conditions. This chain is Lon protease 1, found in Bacillus subtilis (strain 168).